Reading from the N-terminus, the 87-residue chain is UPF0250 protein Ent638_1166 (87 aa).

This sequence belongs to the UPF0250 family.

The protein is UPF0250 protein Ent638_1166 of Enterobacter sp. (strain 638).